We begin with the raw amino-acid sequence, 366 residues long: NADP-dependent isopropanol dehydrogenase (366 aa).

Positions 43, 65, 66, and 156 each coordinate Zn(2+). NADP(+)-binding positions include 181–184, 204–206, Tyr-224, 271–273, and Lys-346; these read IGPV, GSR, and VNY.

Belongs to the zinc-containing alcohol dehydrogenase family. In terms of assembly, homodimer. Zn(2+) is required as a cofactor.

The protein resides in the cytoplasm. The catalysed reaction is propan-2-ol + NADP(+) = acetone + NADPH + H(+). Functionally, alcohol dehydrogenase with a preference for medium chain secondary alcohols, such as 2-butanol and isopropanol. Has very low activity with primary alcohols, such as ethanol. Under physiological conditions, the enzyme reduces aldehydes and 2-ketones to produce secondary alcohols. Is also active with acetaldehyde and propionaldehyde. The polypeptide is NADP-dependent isopropanol dehydrogenase (Entamoeba histolytica (strain ATCC 30459 / HM-1:IMSS / ABRM)).